Reading from the N-terminus, the 299-residue chain is Class II hydrophobin C (299 aa).

The signal sequence occupies residues 1-17 (MKFLTVAAAIFASTSLA). Asparagine 39, asparagine 78, and asparagine 91 each carry an N-linked (GlcNAc...) asparagine glycan. 4 cysteine pairs are disulfide-bonded: cysteine 232-cysteine 281, cysteine 242-cysteine 272, cysteine 243-cysteine 255, and cysteine 282-cysteine 293.

The protein belongs to the cerato-ulmin hydrophobin family.

The protein localises to the secreted. The protein resides in the cell wall. It is found in the vacuole. It localises to the cytoplasmic vesicle. Aerial growth, conidiation, and dispersal of filamentous fungi in the environment rely upon a capability of their secreting small amphipathic proteins called hydrophobins (HPBs) with low sequence identity. Class I can self-assemble into an outermost layer of rodlet bundles on aerial cell surfaces, conferring cellular hydrophobicity that supports fungal growth, development and dispersal; whereas Class II form highly ordered films at water-air interfaces through intermolecular interactions but contribute nothing to the rodlet structure. Hyd2C contributes to certain cell wall-related features, such as hydrophobicity but is not involved in cell wall-related events during fungal proliferation in host hemocoel. Does not contribute to conidial hydrophobicity. Involved actively in the asexual development. This is Class II hydrophobin C from Beauveria bassiana (strain ARSEF 2860) (White muscardine disease fungus).